We begin with the raw amino-acid sequence, 373 residues long: Histidinol-phosphate aminotransferase (373 aa).

K231 carries the post-translational modification N6-(pyridoxal phosphate)lysine.

It belongs to the class-II pyridoxal-phosphate-dependent aminotransferase family. Histidinol-phosphate aminotransferase subfamily. Pyridoxal 5'-phosphate is required as a cofactor.

It catalyses the reaction L-histidinol phosphate + 2-oxoglutarate = 3-(imidazol-4-yl)-2-oxopropyl phosphate + L-glutamate. The protein operates within amino-acid biosynthesis; L-histidine biosynthesis; L-histidine from 5-phospho-alpha-D-ribose 1-diphosphate: step 7/9. The protein is Histidinol-phosphate aminotransferase (hisC) of Methanocaldococcus jannaschii (strain ATCC 43067 / DSM 2661 / JAL-1 / JCM 10045 / NBRC 100440) (Methanococcus jannaschii).